Here is a 491-residue protein sequence, read N- to C-terminus: Sucrose transport protein SUC9 (491 aa).

The segment covering 1–12 has biased composition (basic and acidic residues); the sequence is MSDIQAKEDAAP. The interval 1–26 is disordered; it reads MSDIQAKEDAAPVDRQSSSSVVVPDE. At 1–33 the chain is on the cytoplasmic side; that stretch reads MSDIQAKEDAAPVDRQSSSSVVVPDEPSPLRKM. Phosphoserine is present on Ser-17. The helical transmembrane segment at 34–54 threads the bilayer; it reads ISVASIAAGIQFGWALQLSLL. Over 55–68 the chain is Extracellular; the sequence is TPYVQLLGVPHKWS. The helical transmembrane segment at 69–89 threads the bilayer; the sequence is SFIWLCGPISGLLVQPTVGYF. The Cytoplasmic segment spans residues 90–101; it reads SDRCKSRFGRRR. A helical transmembrane segment spans residues 102–122; that stretch reads PFIATGALLVALAVILIGFAA. Residues 123–139 are Extracellular-facing; the sequence is DFGHTMGDKLDEAVKIR. The chain crosses the membrane as a helical span at residues 140 to 160; that stretch reads AVGFFVVGFWILDVANNTLQG. The Cytoplasmic portion of the chain corresponds to 161-181; the sequence is PCRAFLGDLAAGDAKKTRTAN. A helical transmembrane segment spans residues 182-202; the sequence is AIFSFFMAVGNVLGYAAGSYT. Residues 203-224 lie on the Extracellular side of the membrane; sequence NLHKIFPFTVTKACDIYCANLK. Residues 225–245 traverse the membrane as a helical segment; that stretch reads SCFIISITLLIVLTIIALWYV. At 246-277 the chain is on the cytoplasmic side; it reads EDKQWSPNADSDNEKTPFFGEIFGAFKVMKRP. The helical transmembrane segment at 278-298 threads the bilayer; that stretch reads MWMLLAVTALNWIAWFPFLLY. Residues 299–329 are Extracellular-facing; sequence DTDWMGREVYGGDSAGDDKMKKLYNHGIQVG. The helical transmembrane segment at 330–350 threads the bilayer; the sequence is SLGLMLNSIVLGVMSLVIGVI. At 351–358 the chain is on the cytoplasmic side; that stretch reads SKKIGAKR. Residues 359–379 form a helical membrane-spanning segment; it reads LWGAVNIILAVCLAMTVLVTK. The Extracellular portion of the chain corresponds to 380–406; the sequence is KAEEHRKIAGRMALPTNAIRDGALSLF. Residues 407-427 form a helical membrane-spanning segment; the sequence is AILGIPLAITFSIPFALASII. The Cytoplasmic segment spans residues 428–443; sequence SSSSGAGQGLSLGVLN. The helical transmembrane segment at 444-464 threads the bilayer; that stretch reads MAIVIPQMIVSFGVGPIDALF. Over 465–468 the chain is Extracellular; the sequence is GGGN. Residues 469 to 489 traverse the membrane as a helical segment; the sequence is LPGFVVGAIAALISSVVALTV. Over 490–491 the chain is Cytoplasmic; sequence LP.

The protein belongs to the glycoside-pentoside-hexuronide (GPH) cation symporter transporter (TC 2.A.2.4) family. Widely expressed.

The protein resides in the cell membrane. The enzyme catalyses sucrose(out) + H(+)(out) = sucrose(in) + H(+)(in). The protein operates within glycan biosynthesis; sucrose metabolism. Its activity is regulated as follows. Inhibited by protonophores (e.g. carbonyl cyanide m-chlorophenyl-hydrazone (CCCP)) and SH group inhibitors (e.g. p-chloromercuribenzene sulphonic acid (PCMBS)). Its function is as follows. High-affinity sucrose transporter. Responsible for the transport of sucrose into the cell, with the concomitant uptake of protons (symport system). Can also transport a wide range of glucosides, such as helicin, salicin, arbutin, maltose, fraxin, esculin, uranose, alpha-methylglucoside, alpha-phenylglucoside and beta-phenylglucoside. Plays a role in flowering time transition delay. The protein is Sucrose transport protein SUC9 of Arabidopsis thaliana (Mouse-ear cress).